The sequence spans 648 residues: Cell surface glycoprotein MUC18 (648 aa).

A signal peptide spans 1-23 (MGLPRLVCAFLFAACCCCRSATG). Ig-like V-type domains follow at residues 24-131 (VPGE…HYVQ) and 141-244 (PTIQ…KEVT). Residues 24–560 (VPGEEKQPTP…EKKLPQQESK (537 aa)) are Extracellular-facing. Disulfide bonds link C50-C118, C163-C225, C274-C322, C367-C409, and C454-C501. N-linked (GlcNAc...) asparagine glycosylation is present at N58. Ig-like C2-type domains lie at 246-332 (PVLY…TTVM), 337-426 (PLEL…RRVS), and 432-512 (SPWM…SNTT). Positions 282 to 304 (PHFTINKKNPSTEEMEEESTDEN) are disordered. N-linked (GlcNAc...) asparagine glycosylation occurs at N510. Residues 527–549 (DSSQTTGLSTPTVSPHSRANSTS) show a composition bias toward polar residues. A disordered region spans residues 527 to 554 (DSSQTTGLSTPTVSPHSRANSTSTEKKL). The chain crosses the membrane as a helical span at residues 561-581 (GVVIVAVIVCTLVLAVLGATL). Topologically, residues 582-648 (YYFYKKGKLP…QGEKYIDLRH (67 aa)) are cytoplasmic. S608 and S616 each carry phosphoserine. Residues 626 to 648 (LQGSNGDKRAPGDQGEKYIDLRH) form a disordered region. A compositionally biased stretch (basic and acidic residues) spans 631–648 (GDKRAPGDQGEKYIDLRH).

In terms of tissue distribution, detected in lung, uterus and placenta (at protein level). Detected in heart, lung, kidney, adrenal gland, intestine, testis, skeletal muscle and aorta. Detected at low levels in adult brain, in particular in brain stem and spinal cord, but also in hippocampus, olfactory bulb and striatum (at protein level).

The protein localises to the cell membrane. Its subcellular location is the perikaryon. In terms of biological role, plays a role in cell adhesion, and in cohesion of the endothelial monolayer at intercellular junctions in vascular tissue. Its expression may allow melanoma cells to interact with cellular elements of the vascular system, thereby enhancing hematogeneous tumor spread. Could be an adhesion molecule active in neural crest cells during embryonic development. Acts as a surface receptor that triggers tyrosine phosphorylation of FYN and PTK2/FAK1, and a transient increase in the intracellular calcium concentration. The polypeptide is Cell surface glycoprotein MUC18 (Mcam) (Rattus norvegicus (Rat)).